The primary structure comprises 293 residues: Ubiquinone biosynthesis protein COQ9-B, mitochondrial (293 aa).

The tract at residues 21-73 (LRSDDQKQPPFSSSSTHAETPEHAEEQYQQQQSPPRYTDQAGEESEDYESEEQ) is disordered. The span at 29 to 38 (PPFSSSSTHA) shows a compositional bias: polar residues. Positions 61-72 (AGEESEDYESEE) are enriched in acidic residues. R219 is a binding site for a 1,2-diacylglycero-3-phosphoethanolamine.

Belongs to the COQ9 family. As to quaternary structure, homodimer. Heterodimer; two heterodimers of COQ7:COQ9 come together on the same side of the lipid pseudo-bilayer and form a curved tetramer with a hydrophobic surface suitable for membrane interaction. These two tetramers assemble into a soluble octamer with a pseudo-bilayer of lipids captured within. Interacts with COQ7; this interaction allows ubiquinone (CoQ) isoprene intermediates presentation to COQ7 and facilitates the COQ7-mediated hydroxylase step.

The protein localises to the mitochondrion. Its pathway is cofactor biosynthesis; ubiquinone biosynthesis. Its function is as follows. Membrane-associated protein that warps the membrane surface to access and bind aromatic isoprenes with high specificity, including ubiquinone (CoQ) isoprene intermediates and presents them directly to COQ7, therefore facilitating the COQ7-mediated hydroxylase step. Participates in the biosynthesis of coenzyme Q, also named ubiquinone, an essential lipid-soluble electron transporter for aerobic cellular respiration. This Xenopus laevis (African clawed frog) protein is Ubiquinone biosynthesis protein COQ9-B, mitochondrial (coq9-b).